Reading from the N-terminus, the 524-residue chain is Zinc finger protein GLIS2 (524 aa).

Positions 35-174 (ALHRELGLVD…PKQLVCRWAK (140 aa)) are interaction with CTNND1. 2 disordered regions span residues 39–62 (ELGL…FLLN) and 84–114 (SPPS…VPSA). The transcription activation stretch occupies residues 71–137 (GRFSAAPLVD…SSFQFFLPLG (67 aa)). The segment covering 84 to 100 (SPPSGLDSPNGSSSLSP) has biased composition (low complexity). Residues 148-171 (SFLTPPKDKCLSPDLPLPKQLVCR) form a transcription repression region. The segment at 168–193 (LVCRWAKCNQLFELLQDLVDHVNDYH) adopts a C2H2-type 1 zinc-finger fold. Residues 202–229 (YCCHWEGCARHGRGFNARYKMLIHIRTH) form a C2H2-type 2; atypical zinc finger. 3 consecutive C2H2-type zinc fingers follow at residues 235–257 (HRCP…NRSH), 263–287 (YVCP…TRTH), and 293–317 (YYCK…IKAH). Positions 439 to 480 (GGKAEGEKGRGSVPTRALGMEGHKTPLERTESSCSRPSPDGL) are disordered. Residues 459 to 469 (EGHKTPLERTE) are compositionally biased toward basic and acidic residues.

The protein belongs to the GLI C2H2-type zinc-finger protein family. In terms of assembly, interacts with CTBP1 and HDAC3. Interacts with CTNNB1. Interacts with SUFU. Interacts with CTNND1. Post-translationally, C-terminus cleavage is induced by interaction with CTNND1 and enhanced by Src tyrosine kinase. Expressed at high levels in kidney and at low levels in heart, lung and placenta. Expressed in colon.

It localises to the nucleus speckle. Its subcellular location is the cytoplasm. Functionally, can act either as a transcriptional repressor or as a transcriptional activator, depending on the cell context. Acts as a repressor of the Hedgehog signaling pathway. Represses the Hedgehog-dependent expression of Wnt4. Necessary to maintain the differentiated epithelial phenotype in renal cells through the inhibition of SNAI1, which itself induces the epithelial-to-mesenchymal transition. Represses transcriptional activation mediated by CTNNB1 in the Wnt signaling pathway. May act by recruiting the corepressors CTBP1 and HDAC3. May be involved in neuron differentiation. The sequence is that of Zinc finger protein GLIS2 (GLIS2) from Homo sapiens (Human).